The primary structure comprises 249 residues: Isoamyl acetate-hydrolyzing esterase 1 homolog (249 aa).

Residue serine 24 is the Nucleophile of the active site. The residue at position 63 (lysine 63) is an N6-succinyllysine. The active-site Proton donor is aspartate 197. Histidine 200 acts as the Proton acceptor in catalysis.

This sequence belongs to the 'GDSL' lipolytic enzyme family. IAH1 subfamily.

Probable lipase. The protein is Isoamyl acetate-hydrolyzing esterase 1 homolog (IAH1) of Bos taurus (Bovine).